The chain runs to 1523 residues: Rho GTPase-activating protein gacHH (1523 aa).

3 Kelch repeats span residues 30–76 (DIVI…YGHS), 83–133 (KMFV…LIYD), and 135–184 (YILI…DISP). 2 stretches are compositionally biased toward polar residues: residues 161-173 (NSWT…SSTG) and 184-194 (PRSSTTTPTHQ). The interval 161–256 (NSWTKPSSNS…GGSPMTTPPT (96 aa)) is disordered. Positions 195-211 (SVNGSNSNSSSSSRVRS) are enriched in low complexity. Residues 212-221 (ATISSHNNSP) are compositionally biased toward polar residues. The segment covering 227 to 244 (NNNNNNNNNSNNSNNSNN) has biased composition (low complexity). 3 Kelch repeats span residues 335 to 384 (KAFI…AIGS), 386 to 441 (LFIF…PISS), and 443 to 496 (ILII…PITS). Disordered regions lie at residues 510–569 (LPHL…DNIN), 609–631 (QSID…VSND), and 647–671 (NKNN…NSGS). The span at 615–626 (GGSGGGSGGGNG) shows a compositional bias: gly residues. A coiled-coil region spans residues 690-729 (CIKKYNSLKDSYLELKQKYQEEREKRLELEKELERYRLSS). A disordered region spans residues 748-786 (NINSNNSTTTTTTTTTTTTTPIPLSTSNNNNNNNNNSTL). Residues 812–840 (YEKRVKWKENTEKEANQQLEVIKSKIDLF) adopt a coiled-coil conformation. 5 disordered regions span residues 861–881 (SENI…QNPQ), 905–927 (LTPR…PIPL), 963–991 (TPQK…SKST), 1006–1096 (SGHF…RLGK), and 1143–1194 (NGAN…SERI). The segment covering 870–881 (QQQQQQQQQNPQ) has biased composition (low complexity). Residues 905–915 (LTPRKSRENSV) are compositionally biased toward basic and acidic residues. Composition is skewed to low complexity over residues 971 to 981 (PQQQQQQQPPQ), 1012 to 1030 (SSSN…FSNN), 1043 to 1079 (QHQQ…LQTQ), and 1143 to 1153 (NGANNLGGLVL). A coiled-coil region spans residues 1151-1228 (LVLTSDKEKE…KKHKKIKGLF (78 aa)). Positions 1155–1194 (SDKEKEKLEKEREKSERIEREKQEKEREKLEKEREKSERI) are enriched in basic and acidic residues. The 179-residue stretch at 1233–1411 (SNKESLPFRR…TFIEDFHYIF (179 aa)) folds into the Rho-GAP domain. A disordered region spans residues 1425-1482 (DDDYDSSSFGSNNTPSSHSPHSSSPTLNPAVTTTTTTTTTTNTTTTTNTTTTPTSATI). Residues 1430 to 1476 (SSSFGSNNTPSSHSPHSSSPTLNPAVTTTTTTTTTTNTTTTTNTTTT) are compositionally biased toward low complexity.

It is found in the cytoplasm. Rho GTPase-activating protein involved in the signal transduction pathway. The sequence is that of Rho GTPase-activating protein gacHH (gacHH) from Dictyostelium discoideum (Social amoeba).